The following is a 714-amino-acid chain: Calpain-1 catalytic subunit (714 aa).

A Calpain catalytic domain is found at 55–354; it reads LFRDEAFPPV…FTRLEICNLT (300 aa). Ca(2+) contacts are provided by Gln-109 and Asp-114. Catalysis depends on residues Cys-115, His-272, and Asn-296. Residues Asn-316, Asp-318, and Asp-323 each coordinate Ca(2+). Thr-354 is modified (phosphothreonine). The domain III stretch occupies residues 355–526; sequence PDALKSRTIR…KSAGTAELDD (172 aa). The segment at 527–542 is linker; that stretch reads QIQANLPDEQVLSEEE. EF-hand domains are found at residues 541–576, 585–618, 615–650, and 680–714; these read EEID…IISK, FSLE…NRIR, NRIR…AGFK, and VRLE…TMFA. The domain IV stretch occupies residues 543–713; it reads IDENFKALFR…LFKWLQLTMF (171 aa). Residues Asp-598, Asp-600, Asn-602, Lys-604, Glu-609, Asp-628, Asp-630, Ser-632, Ser-634, and Glu-639 each coordinate Ca(2+).

It belongs to the peptidase C2 family. In terms of assembly, forms a heterodimer with a small (regulatory) subunit CAPNS1. It depends on Ca(2+) as a cofactor. Post-translationally, undergoes calcium-induced successive autoproteolytic cleavages that generate a membrane-bound 78 kDa active form and an intracellular 75 kDa active form. Calpastatin reduces with high efficiency the transition from 78 kDa to 75 kDa calpain forms.

It is found in the cytoplasm. Its subcellular location is the cell membrane. It carries out the reaction Broad endopeptidase specificity.. Its activity is regulated as follows. Activated by micromolar concentrations of calcium and inhibited by calpastatin. Functionally, calcium-regulated non-lysosomal thiol-protease which catalyzes limited proteolysis of substrates involved in cytoskeletal remodeling and signal transduction. Proteolytically cleaves CTBP1. Cleaves and activates caspase-7 (CASP7). This is Calpain-1 catalytic subunit from Pongo abelii (Sumatran orangutan).